A 381-amino-acid chain; its full sequence is ATP synthase subunit a (381 aa).

Positions 24 to 73 are disordered; sequence PVAAPVEQHGQAPEAAPDAHGSPAGEPGAAVEAHAAAAEHGEAAGHEGGH. A compositionally biased stretch (low complexity) spans 47-59; the sequence is AGEPGAAVEAHAA. Basic and acidic residues predominate over residues 60-73; it reads AAEHGEAAGHEGGH. 6 helical membrane-spanning segments follow: residues 128–148, 190–210, 215–235, 255–275, 290–310, and 316–336; these read KHVV…LGAV, LVTA…PFSA, NLSV…YAAI, LAPL…TKPF, FVIL…VAFG, and LSIF…FTML. Positions 351 to 360 are enriched in basic and acidic residues; the sequence is DHGHAEEHGH. A disordered region spans residues 351–381; the sequence is DHGHAEEHGHAGPAAGSEHGSHVAGASPGHG.

The protein belongs to the ATPase A chain family. F-type ATPases have 2 components, CF(1) - the catalytic core - and CF(0) - the membrane proton channel. CF(1) has five subunits: alpha(3), beta(3), gamma(1), delta(1), epsilon(1). CF(0) has three main subunits: a(1), b(2) and c(9-12). The alpha and beta chains form an alternating ring which encloses part of the gamma chain. CF(1) is attached to CF(0) by a central stalk formed by the gamma and epsilon chains, while a peripheral stalk is formed by the delta and b chains.

It localises to the cell inner membrane. Its function is as follows. Key component of the proton channel; it plays a direct role in the translocation of protons across the membrane. This Anaeromyxobacter dehalogenans (strain 2CP-C) protein is ATP synthase subunit a.